The sequence spans 357 residues: Gas vesicle ATPase GvpN (357 aa).

A compositionally biased stretch (polar residues) spans Ala22–Ala36. The disordered stretch occupies residues Ala22–Ser43. Gly72–Thr79 is an ATP binding site.

Belongs to the CbbQ/NirQ/NorQ/GpvN family. Forms homodimers, probably interacts with other GV proteins including GvpA.

The protein resides in the gas vesicle. It localises to the cytoplasm. The catalysed reaction is ATP + H2O = ADP + phosphate + H(+). An ATPase that functions in gas vesicle formation. A minor component of the gas vesicle, also found in soluble extracts. Gas vesicles (GV) are hollow, gas filled proteinaceous nanostructures. During planktonic growth they allow positioning of the organism at a favorable depth for light or nutrient acquisition. This Ancylobacter aquaticus protein is Gas vesicle ATPase GvpN.